The sequence spans 354 residues: DNA replication and repair protein RecF (354 aa).

30–37 lines the ATP pocket; the sequence is GDNGSGKT.

Belongs to the RecF family.

It localises to the cytoplasm. In terms of biological role, the RecF protein is involved in DNA metabolism; it is required for DNA replication and normal SOS inducibility. RecF binds preferentially to single-stranded, linear DNA. It also seems to bind ATP. This chain is DNA replication and repair protein RecF, found in Idiomarina loihiensis (strain ATCC BAA-735 / DSM 15497 / L2-TR).